A 739-amino-acid chain; its full sequence is Glycine--tRNA ligase (739 aa).

Residues 1–36 (MPSPRPVLLRGARAALLLLLPPRLLARPSLLLRRSL) constitute a mitochondrion transit peptide. Phosphoserine is present on Ser35. In terms of domain architecture, WHEP-TRS spans 63 to 119 (VLAPLRLAVRQQGDLVRKLKEDKAPQVDVDKAVAELKARKRVLEAKELALQPKDDIV). Lys204 carries the post-translational modification N6-acetyllysine. A glycine-binding site is contributed by Glu299. ATP is bound by residues 331–333 (RNE) and 342–343 (RV). Position 350 (Glu350) interacts with glycine. Tyr453 is subject to Phosphotyrosine. 457 to 458 (EI) is an ATP binding site. Residue Lys501 is modified to N6-acetyllysine. Glycine is bound at residue 576 to 578 (EPS). Arg583 contributes to the ATP binding site. Ser700 is subject to Phosphoserine. Thr736 is modified (phosphothreonine).

Belongs to the class-II aminoacyl-tRNA synthetase family. Homodimer. Widely expressed, including in brain and spinal cord. As to expression, expressed in brain, spinal cord, muscle, heart and spleen. In terms of tissue distribution, expressed in brain, spinal cord, muscle, heart, spleen and liver.

The protein resides in the cytoplasm. Its subcellular location is the cell projection. It localises to the axon. The protein localises to the secreted. It is found in the extracellular exosome. The protein resides in the mitochondrion. The catalysed reaction is tRNA(Gly) + glycine + ATP = glycyl-tRNA(Gly) + AMP + diphosphate. It carries out the reaction 2 ATP + H(+) = P(1),P(4)-bis(5'-adenosyl) tetraphosphate + diphosphate. With respect to regulation, ap4A synthesis is inhibited by tRNA, via the disruption of the second ATP-binding site by direct blocking and/or by tRNA-induced conformational change. Catalyzes the ATP-dependent ligation of glycine to the 3'-end of its cognate tRNA, via the formation of an aminoacyl-adenylate intermediate (Gly-AMP). Also produces diadenosine tetraphosphate (Ap4A), a universal pleiotropic signaling molecule needed for cell regulation pathways, by direct condensation of 2 ATPs. Thereby, may play a special role in Ap4A homeostasis. In Homo sapiens (Human), this protein is Glycine--tRNA ligase.